The following is a 473-amino-acid chain: B box and SPRY domain-containing protein (473 aa).

Residues 1-69 are disordered; it reads MSADVSGTES…PKQGSERSQL (69 aa). Over residues 35–51 the composition is skewed to pro residues; the sequence is KPGPGPEPRPESGPEPG. The segment at 65-113 adopts a B box-type zinc-finger fold; sequence ERSQLCPEHFEPLSWFCLSERRPVCATCAGFGGRCHRHRIRRAEEHAEE. The B30.2/SPRY domain maps to 259–455; the sequence is SPLLTQLWAA…ISIVRGPLAT (197 aa).

Interacts with YWHAZ/14-3-3 protein zeta. Interacts with TRPV5 and TRPV6. According to PubMed:10978534, testis-specific. According to PubMed:16371431, broadly expressed.

The protein resides in the cytoplasm. Its subcellular location is the membrane. In terms of biological role, may regulate epithelial calcium transport by inhibiting TRPV5 activity. This is B box and SPRY domain-containing protein (Bspry) from Mus musculus (Mouse).